We begin with the raw amino-acid sequence, 3584 residues long: D-lysergyl-peptide-synthetase subunit 1 (3584 aa).

The segment at 25 to 44 is disordered; sequence IESINGDKNKSERHTASSSA. A compositionally biased stretch (basic and acidic residues) spans 29–39; sequence NGDKNKSERHT. The tract at residues 307–706 is adenylation (A) domain 1; it reads SCCSRPNSQA…LGRKDDQVKI (400 aa). The 70-residue stretch at 848–917 folds into the Carrier 1 domain; the sequence is REKLLQALFA…TLREIVIVST (70 aa). S880 is subject to O-(pantetheine 4'-phosphoryl)serine. Residues 962-1353 form a condensation (C) domain 1 region; sequence EDIYPCTHLQ…EHILTQIHSN (392 aa). The interval 1396 to 1803 is adenylation (A) domain 2; sequence QAKCQAQPDA…RRKDAQVKIR (408 aa). The Carrier 2 domain occupies 1948–2016; that stretch reads TEHEISAIWA…TIRKLALARG (69 aa). An O-(pantetheine 4'-phosphoryl)serine modification is found at S1980. Positions 2066 to 2483 are condensation (C) domain 2; it reads ERIYPCSPIQ…ALPVLDEDQM (418 aa). The tract at residues 2508-2906 is adenylation (A) domain 3; it reads QCIRCPDSPS…GRNDDQVKVR (399 aa). Residues 3041 to 3109 enclose the Carrier 3 domain; sequence MEAELQQLVG…RLSDLARIVE (69 aa). The residue at position 3073 (S3073) is an O-(pantetheine 4'-phosphoryl)serine. The segment at 3174 to 3472 is cyclization (Cyc) domain; it reads LYFSKPMASE…VAKSTTWSSD (299 aa).

Belongs to the NRP synthetase family.

It participates in alkaloid biosynthesis; ergot alkaloid biosynthesis. D-lysergyl-peptide-synthetase subunit 1; part of the gene cluster that mediates the biosynthesis of fungal ergot alkaloid. DmaW catalyzes the first step of ergot alkaloid biosynthesis by condensing dimethylallyl diphosphate (DMAP) and tryptophan to form 4-dimethylallyl-L-tryptophan. The second step is catalyzed by the methyltransferase easF that methylates 4-dimethylallyl-L-tryptophan in the presence of S-adenosyl-L-methionine, resulting in the formation of 4-dimethylallyl-L-abrine. The catalase easC and the FAD-dependent oxidoreductase easE then transform 4-dimethylallyl-L-abrine to chanoclavine-I which is further oxidized by easD in the presence of NAD(+), resulting in the formation of chanoclavine-I aldehyde. Agroclavine dehydrogenase easG then mediates the conversion of chanoclavine-I aldehyde to agroclavine via a non-enzymatic adduct reaction: the substrate is an iminium intermediate that is formed spontaneously from chanoclavine-I aldehyde in the presence of glutathione. The presence of easA is not required to complete this reaction. Further conversion of agroclavine to paspalic acid is a two-step process involving oxidation of agroclavine to elymoclavine and of elymoclavine to paspalic acid, the second step being performed by the elymoclavine oxidase cloA. Paspalic acid is then further converted to D-lysergic acid. Ergopeptines are assembled from D-lysergic acid and three different amino acids by the D-lysergyl-peptide-synthetases composed each of a monomudular and a trimodular nonribosomal peptide synthetase subunit. LpsB and lpsC encode the monomodular subunits responsible for D-lysergic acid activation and incorporation into the ergopeptine backbone. LpsA1 and A2 subunits encode the trimodular nonribosomal peptide synthetase assembling the tripeptide portion of ergopeptines. LpsA1 is responsible for formation of the major ergopeptine, ergotamine, and lpsA2 for alpha-ergocryptine, the minor ergopeptine of the total alkaloid mixture elaborated by C.purpurea. D-lysergyl-tripeptides are assembled by the nonribosomal peptide synthetases and released as N-(D-lysergyl-aminoacyl)-lactams. Cyclolization of the D-lysergyl-tripeptides is performed by the Fe(2+)/2-ketoglutarate-dependent dioxygenase easH which introduces a hydroxyl group into N-(D-lysergyl-aminoacyl)-lactam at alpha-C of the aminoacyl residue followed by spontaneous condensation with the terminal lactam carbonyl group. This is D-lysergyl-peptide-synthetase subunit 1 from Claviceps purpurea (strain 20.1) (Ergot fungus).